Here is a 645-residue protein sequence, read N- to C-terminus: Zinc finger protein 235 (645 aa).

The KRAB domain occupies Val8–Arg86. Disordered stretches follow at residues Gly112–Ser144 and Lys255–Pro280. Polar residues predominate over residues Leu129–Ser144. C2H2-type zinc fingers lie at residues Tyr285–His307, Tyr313–His335, Tyr341–His363, Tyr369–His391, Tyr397–His419, Tyr425–His447, Phe453–His475, Tyr481–His503, Tyr509–His531, Phe537–His559, Tyr565–His587, Phe593–His615, and Tyr621–His643.

It belongs to the krueppel C2H2-type zinc-finger protein family.

Its subcellular location is the nucleus. In terms of biological role, may be involved in transcriptional regulation. The chain is Zinc finger protein 235 (Znf235) from Mus musculus (Mouse).